A 159-amino-acid chain; its full sequence is Vesicle transport protein SFT2A (159 aa).

The Cytoplasmic segment spans residues 1-36 (MEKLRRVLSGQDDEEQGLTAQVLDASSLSFNTRLKW). Phosphoserine is present on Ser9. A helical transmembrane segment spans residues 37–57 (FAICFVCGVFFSILGTGLLWL). At 58–62 (PGGIK) the chain is on the lumenal side. Residues 63 to 83 (LFAVFYTLGNLAALASTCFLM) form a helical membrane-spanning segment. Residues 84-97 (GPVKQLKKMFEATR) lie on the Cytoplasmic side of the membrane. Residues 98 to 118 (LLATIVMLLCFIFTLCAALWW) form a helical membrane-spanning segment. Over 119–122 (HKKG) the chain is Lumenal. A helical membrane pass occupies residues 123-143 (LAVLFCILQFLSMTWYSLSYI). Residues 144–159 (PYARDAVIKCCSSLLS) lie on the Cytoplasmic side of the membrane.

It belongs to the SFT2 family.

The protein resides in the membrane. Its function is as follows. May be involved in fusion of retrograde transport vesicles derived from an endocytic compartment with the Golgi complex. This chain is Vesicle transport protein SFT2A, found in Homo sapiens (Human).